The following is a 216-amino-acid chain: Large ribosomal subunit protein uL1y (216 aa).

It belongs to the universal ribosomal protein uL1 family. As to quaternary structure, interacts with the GTPase NUG2.

This chain is Large ribosomal subunit protein uL1y (RPL10AB), found in Arabidopsis thaliana (Mouse-ear cress).